Consider the following 349-residue polypeptide: 1-acylglycerol-3-phosphate O-acyltransferase ABHD5 (349 aa).

Residue A2 is modified to N-acetylalanine. Positions 77 to 184 constitute an AB hydrolase-1 domain; that stretch reads PLVLLHGFGG…LVEPWGFPER (108 aa). S122 carries the phosphoserine modification. Residues 327–332 carry the HXXXXD motif motif; sequence HYVYAD.

This sequence belongs to the peptidase S33 family. ABHD4/ABHD5 subfamily. Interacts with ADRP, PLIN and PNPLA2. Interacts with PLIN5; promotes interaction with PNPLA2.

It is found in the cytoplasm. The protein resides in the lipid droplet. The catalysed reaction is a 1-acyl-sn-glycero-3-phosphate + an acyl-CoA = a 1,2-diacyl-sn-glycero-3-phosphate + CoA. It carries out the reaction 1-(9Z-octadecenoyl)-sn-glycero-3-phosphate + (9Z)-octadecenoyl-CoA = 1,2-di-(9Z-octadecenoyl)-sn-glycero-3-phosphate + CoA. The enzyme catalyses 1-(9Z-octadecenoyl)-sn-glycero-3-phosphate + hexadecanoyl-CoA = 1-(9Z)-octadecenoyl-2-hexadecanoyl-sn-glycero-3-phosphate + CoA. It catalyses the reaction 1-(9Z-octadecenoyl)-sn-glycero-3-phosphate + octadecanoyl-CoA = 1-(9Z-octadecenoyl)-2-octadecanoyl-sn-glycero-3-phosphate + CoA. The catalysed reaction is 1-(9Z-octadecenoyl)-sn-glycero-3-phosphate + (5Z,8Z,11Z,14Z)-eicosatetraenoyl-CoA = 1-(9Z)-octadecenoyl-2-(5Z,8Z,11Z,14Z)-eicosatetraenoyl-sn-glycero-3-phosphate + CoA. It carries out the reaction eicosanoyl-CoA + 1-(9Z-octadecenoyl)-sn-glycero-3-phosphate = 1-(9Z)-octadecenoyl-2-eicosanoyl-sn-glycero-3-phosphate + CoA. The enzyme catalyses 1-hexadecanoyl-sn-glycero-3-phosphate + (9Z)-octadecenoyl-CoA = 1-hexadecanoyl-2-(9Z-octadecenoyl)-sn-glycero-3-phosphate + CoA. It catalyses the reaction 1-octadecanoyl-sn-glycero-3-phosphate + (9Z)-octadecenoyl-CoA = 1-octadecanoyl-2-(9Z-octadecenoyl)-sn-glycero-3-phosphate + CoA. The catalysed reaction is 1-(5Z,8Z,11Z,14Z-eicosatetraenoyl)-sn-glycero-3-phosphate + (9Z)-octadecenoyl-CoA = 1-(5Z,8Z,11Z,14Z)-eicosatetraenoyl-2-(9Z)-octadecenoyl-sn-glycero-3-phosphate + CoA. Acyltransferase activity is inhibited by detergents such as Triton X-100 and 3-[(3-cholamidopropyl)dimethylammonio]-1-propanesulfonate (CHAPS). Acyltransferase activity is inhibited by the presence of magnesium and calcium. Its function is as follows. Coenzyme A-dependent lysophosphatidic acid acyltransferase that catalyzes the transfer of an acyl group on a lysophosphatidic acid. Functions preferentially with 1-oleoyl-lysophosphatidic acid followed by 1-palmitoyl-lysophosphatidic acid, 1-stearoyl-lysophosphatidic acid and 1-arachidonoyl-lysophosphatidic acid as lipid acceptor. Functions preferentially with arachidonoyl-CoA followed by oleoyl-CoA as acyl group donors. Functions in phosphatidic acid biosynthesis. May regulate the cellular storage of triacylglycerol through activation of the phospholipase PNPLA2. Involved in keratinocyte differentiation. Regulates lipid droplet fusion. This Pongo abelii (Sumatran orangutan) protein is 1-acylglycerol-3-phosphate O-acyltransferase ABHD5.